Here is a 461-residue protein sequence, read N- to C-terminus: CBL-interacting protein kinase 5 (461 aa).

Residues 12–266 (YELGRMLGQG…VEKLVEHPWF (255 aa)) form the Protein kinase domain. Residues 18-26 (LGQGTFAKV) and K41 contribute to the ATP site. The Proton acceptor role is filled by D134. Residues 152–181 (DFGLSAFKECQKQDGLLHTTCGTPAYVAPE) form an activation loop region. An NAF domain is found at 300 to 334 (EGKAKEPASSLKPVSLNAFDIISLSKGFDLSGLFE). Positions 340-369 (KADSRFMTQKPASAIVSKLEQIAETESFKV) are PPI. The tract at residues 440–461 (HPSLAQSSTLTQSSKSISRHAI) is disordered. Over residues 442 to 455 (SLAQSSTLTQSSKS) the composition is skewed to low complexity.

This sequence belongs to the protein kinase superfamily. CAMK Ser/Thr protein kinase family. SNF1 subfamily. It depends on Mn(2+) as a cofactor.

The enzyme catalyses L-seryl-[protein] + ATP = O-phospho-L-seryl-[protein] + ADP + H(+). It carries out the reaction L-threonyl-[protein] + ATP = O-phospho-L-threonyl-[protein] + ADP + H(+). In terms of biological role, CIPK serine-threonine protein kinases interact with CBL proteins. Binding of a CBL protein to the regulatory NAF domain of CIPK protein lead to the activation of the kinase in a calcium-dependent manner. The chain is CBL-interacting protein kinase 5 (CIPK5) from Oryza sativa subsp. japonica (Rice).